The primary structure comprises 873 residues: DNA mismatch repair protein MutS (873 aa).

601 to 608 (GPNMSGKS) contacts ATP.

The protein belongs to the DNA mismatch repair MutS family.

This protein is involved in the repair of mismatches in DNA. It is possible that it carries out the mismatch recognition step. This protein has a weak ATPase activity. This chain is DNA mismatch repair protein MutS, found in Staphylococcus epidermidis (strain ATCC 12228 / FDA PCI 1200).